The chain runs to 248 residues: Tropomyosin alpha-4 chain (248 aa).

Residue Ala-2 is modified to N-acetylalanine. The stretch at 2 to 248 forms a coiled coil; the sequence is AGLNSLEAVK…DQTLDELNCI (247 aa). Phosphoserine is present on Ser-6. Residues 16–47 form a disordered region; the sequence is ALQQQADEAEDRAQGLQRELDGERERREKAEG. Residues 33 to 47 show a composition bias toward basic and acidic residues; that stretch reads RELDGERERREKAEG. An N6-acetyllysine mark is found at Lys-177 and Lys-215. Thr-216 is modified (phosphothreonine).

This sequence belongs to the tropomyosin family. As to quaternary structure, homodimer. Heterodimer of an alpha (TPM1, TPM3 or TPM4) and a beta (TPM2) chain.

Its subcellular location is the cytoplasm. The protein localises to the cytoskeleton. In terms of biological role, binds to actin filaments in muscle and non-muscle cells. Plays a central role, in association with the troponin complex, in the calcium dependent regulation of vertebrate striated muscle contraction. Smooth muscle contraction is regulated by interaction with caldesmon. In non-muscle cells is implicated in stabilizing cytoskeleton actin filaments. Binds calcium. This Equus caballus (Horse) protein is Tropomyosin alpha-4 chain (TPM4).